Consider the following 361-residue polypeptide: Serine/threonine-protein kinase SRK2B (361 aa).

The Protein kinase domain occupies 4–260; the sequence is YELVKDIGAG…IGDIKKHPWF (257 aa). ATP-binding positions include 10-18 and Lys33; that span reads IGAGNFGVA. The active-site Proton acceptor is the Asp123. A Phosphoserine modification is found at Ser154. The interval 311 to 361 is disordered; it reads AFGWGGGEDAEGKEEDAEEEVEEVEEEEDEEDEYDKTVKQVHASMGEVRVS. Residues 318–344 are compositionally biased toward acidic residues; the sequence is EDAEGKEEDAEEEVEEVEEEEDEEDEY.

This sequence belongs to the protein kinase superfamily. Ser/Thr protein kinase family. Expressed in seedlings.

It catalyses the reaction L-seryl-[protein] + ATP = O-phospho-L-seryl-[protein] + ADP + H(+). The catalysed reaction is L-threonyl-[protein] + ATP = O-phospho-L-threonyl-[protein] + ADP + H(+). The polypeptide is Serine/threonine-protein kinase SRK2B (SRK2B) (Arabidopsis thaliana (Mouse-ear cress)).